The following is a 621-amino-acid chain: Altered inheritance of mitochondria protein 9, mitochondrial (621 aa).

The transit peptide at 1-40 (MIRSTTAKLGKRCATLRVRASPILRPLVATRCITNKADEV) directs the protein to the mitochondrion.

It belongs to the AIM9 family.

It localises to the mitochondrion. The protein is Altered inheritance of mitochondria protein 9, mitochondrial (AIM9) of Zygosaccharomyces rouxii (strain ATCC 2623 / CBS 732 / NBRC 1130 / NCYC 568 / NRRL Y-229).